Consider the following 331-residue polypeptide: tRNA N6-adenosine threonylcarbamoyltransferase (331 aa).

Fe cation contacts are provided by His-109, His-113, and Tyr-130. Substrate-binding positions include 130–134 (YLSGG), Asp-162, Asp-183, and Ser-262. Asp-290 is a binding site for Fe cation.

This sequence belongs to the KAE1 / TsaD family. Fe(2+) is required as a cofactor.

Its subcellular location is the cytoplasm. It catalyses the reaction L-threonylcarbamoyladenylate + adenosine(37) in tRNA = N(6)-L-threonylcarbamoyladenosine(37) in tRNA + AMP + H(+). In terms of biological role, required for the formation of a threonylcarbamoyl group on adenosine at position 37 (t(6)A37) in tRNAs that read codons beginning with adenine. Is probably involved in the transfer of the threonylcarbamoyl moiety of threonylcarbamoyl-AMP (TC-AMP) to the N6 group of A37. This Saccharolobus islandicus (strain Y.G.57.14 / Yellowstone #1) (Sulfolobus islandicus) protein is tRNA N6-adenosine threonylcarbamoyltransferase.